The primary structure comprises 318 residues: GTP cyclohydrolase MptA (318 aa).

It belongs to the GTP cyclohydrolase IV family. As to quaternary structure, homodimer. Requires Fe(2+) as cofactor.

It catalyses the reaction GTP + H2O = 7,8-dihydroneopterin 2',3'-cyclic phosphate + formate + diphosphate + H(+). It participates in cofactor biosynthesis; 5,6,7,8-tetrahydromethanopterin biosynthesis. Converts GTP to 7,8-dihydro-D-neopterin 2',3'-cyclic phosphate, the first intermediate in the biosynthesis of coenzyme methanopterin. The chain is GTP cyclohydrolase MptA from Methanosarcina mazei (strain ATCC BAA-159 / DSM 3647 / Goe1 / Go1 / JCM 11833 / OCM 88) (Methanosarcina frisia).